Consider the following 84-residue polypeptide: Cell division topological specificity factor (84 aa).

Belongs to the MinE family.

Its function is as follows. Prevents the cell division inhibition by proteins MinC and MinD at internal division sites while permitting inhibition at polar sites. This ensures cell division at the proper site by restricting the formation of a division septum at the midpoint of the long axis of the cell. The protein is Cell division topological specificity factor of Pseudomonas entomophila (strain L48).